A 168-amino-acid chain; its full sequence is ATP synthase F(1) complex subunit delta, mitochondrial (168 aa).

A mitochondrion-targeting transit peptide spans M1–Y22. Residues K136 and K165 each carry the N6-acetyllysine; alternate modification. N6-succinyllysine; alternate occurs at positions 136 and 165.

It belongs to the ATPase epsilon chain family. As to quaternary structure, component of the ATP synthase complex composed at least of ATP5F1A/subunit alpha, ATP5F1B/subunit beta, ATP5MC1/subunit c (homooctomer), MT-ATP6/subunit a, MT-ATP8/subunit 8, ATP5ME/subunit e, ATP5MF/subunit f, ATP5MG/subunit g, ATP5MK/subunit k, ATP5MJ/subunit j, ATP5F1C/subunit gamma, ATP5F1D/subunit delta, ATP5F1E/subunit epsilon, ATP5PF/subunit F6, ATP5PB/subunit b, ATP5PD/subunit d, ATP5PO/subunit OSCP. ATP synthase complex consists of a soluble F(1) head domain (subunits alpha(3) and beta(3)) - the catalytic core - and a membrane F(0) domain - the membrane proton channel (subunits c, a, 8, e, f, g, k and j). These two domains are linked by a central stalk (subunits gamma, delta, and epsilon) rotating inside the F1 region and a stationary peripheral stalk (subunits F6, b, d, and OSCP). Component of a complex composed at least by ATPIF1, ATP5F1A, ATP5F1B, ATP5F1C AND ATP5F1E.

The protein resides in the mitochondrion. It is found in the mitochondrion inner membrane. Its function is as follows. Subunit delta, of the mitochondrial membrane ATP synthase complex (F(1)F(0) ATP synthase or Complex V) that produces ATP from ADP in the presence of a proton gradient across the membrane which is generated by electron transport complexes of the respiratory chain. ATP synthase complex consist of a soluble F(1) head domain - the catalytic core - and a membrane F(1) domain - the membrane proton channel. These two domains are linked by a central stalk rotating inside the F(1) region and a stationary peripheral stalk. During catalysis, ATP synthesis in the catalytic domain of F(1) is coupled via a rotary mechanism of the central stalk subunits to proton translocation. In vivo, can only synthesize ATP although its ATP hydrolase activity can be activated artificially in vitro. With the central stalk subunit gamma, is essential for the biogenesis of F(1) catalytic part of the ATP synthase complex namely in the formation of F1 assembly intermediate. This is ATP synthase F(1) complex subunit delta, mitochondrial from Homo sapiens (Human).